The primary structure comprises 427 residues: POU domain protein CF1A (427 aa).

Disordered stretches follow at residues 39-77 (YMQH…GLGS), 196-217 (HHHM…TPTS), 288-309 (TTGS…KKRT), and 390-427 (HDMH…LAAH). A compositionally biased stretch (low complexity) spans 49–66 (AAAAAAHHQLPSSPSPNG). The segment covering 67–77 (QGNGGGLGLGS) has biased composition (gly residues). A POU-specific domain is found at 212 to 286 (EDTPTSDDLE…LLQKWLEEAD (75 aa)). A DNA-binding region (homeobox) is located at residues 304-363 (KRKKRTSIEVSVKGALEQHFHKQPKPSAQEITSLADSLQLEKEVVRVWFCNRRQKEKRMT).

The protein belongs to the POU transcription factor family. Class-3 subfamily. In terms of tissue distribution, coexpressed with acj6 in overlapping subsets of neurons in the embryonic epidermis and central nervous system. First detected in the precursor of the tracheal pits and the stomodeal invagination and later in the peripheral nervous system.

The protein localises to the nucleus. Functionally, binds to a DNA sequence element required for the expression of the dopa decarboxylase gene (Ddc) in specific dopaminergic neurons. Could also play an early role in specific ectodermal cells, and a subsequent role in the embryonic nervous system. In Drosophila melanogaster (Fruit fly), this protein is POU domain protein CF1A (vvl).